The primary structure comprises 394 residues: DNA replication and repair protein RecF (394 aa).

30-37 is an ATP binding site; it reads GRNGFGKT.

The protein belongs to the RecF family.

It localises to the cytoplasm. The RecF protein is involved in DNA metabolism; it is required for DNA replication and normal SOS inducibility. RecF binds preferentially to single-stranded, linear DNA. It also seems to bind ATP. The protein is DNA replication and repair protein RecF of Corynebacterium glutamicum (strain ATCC 13032 / DSM 20300 / JCM 1318 / BCRC 11384 / CCUG 27702 / LMG 3730 / NBRC 12168 / NCIMB 10025 / NRRL B-2784 / 534).